Consider the following 507-residue polypeptide: Ribonuclease Y (507 aa).

A helical membrane pass occupies residues 1-21; it reads MLWYIVAGAGGLLIGYLIANY. The KH domain occupies 197–282; sequence TVSTVSLPSD…EMYEKAKQEV (86 aa). Residues 323–416 form the HD domain; it reads VLNHSIEVAL…VAAADALSAA (94 aa).

It belongs to the RNase Y family.

It localises to the cell membrane. Endoribonuclease that initiates mRNA decay. The polypeptide is Ribonuclease Y (Thermotoga sp. (strain RQ2)).